The chain runs to 238 residues: MGRKWANIVAKKTAKDGANSKVYAKFGVEIYVAAKQGEPDPESNSALKFVLDRAKQAQVPKHVIDKAIDKAKGNTDETFVEGRYEGFGPNGSMIIVDTLTSNVNRTAANVRTAYGKNGGNMGASGSVSYLFDKKGVIVFAGDDADTVFEQLLEADVDVDDVEAEEGTITVYTAPTDLHKGIQALRDNGVEEFQVTELEMIPQSEVVLEGDDLETFEKLIDALESDDDVQKVYHNVADF.

This sequence belongs to the TACO1 family. YeeN subfamily.

It localises to the cytoplasm. In Streptococcus agalactiae serotype Ia (strain ATCC 27591 / A909 / CDC SS700), this protein is Probable transcriptional regulatory protein SAK_1658.